A 72-amino-acid polypeptide reads, in one-letter code: Translation initiation factor IF-1 (72 aa).

The region spanning 1–72 (MAKEDMIEVE…TRGRITYRFK (72 aa)) is the S1-like domain.

The protein belongs to the IF-1 family. Component of the 30S ribosomal translation pre-initiation complex which assembles on the 30S ribosome in the order IF-2 and IF-3, IF-1 and N-formylmethionyl-tRNA(fMet); mRNA recruitment can occur at any time during PIC assembly.

It is found in the cytoplasm. In terms of biological role, one of the essential components for the initiation of protein synthesis. Stabilizes the binding of IF-2 and IF-3 on the 30S subunit to which N-formylmethionyl-tRNA(fMet) subsequently binds. Helps modulate mRNA selection, yielding the 30S pre-initiation complex (PIC). Upon addition of the 50S ribosomal subunit IF-1, IF-2 and IF-3 are released leaving the mature 70S translation initiation complex. The chain is Translation initiation factor IF-1 from Enterococcus faecalis (strain ATCC 700802 / V583).